A 539-amino-acid chain; its full sequence is O-phosphoserine--tRNA(Cys) ligase (539 aa).

Residues 188-190 (HMT), 233-235 (SAS), 275-276 (YY), and Asn-327 each bind substrate.

It belongs to the class-II aminoacyl-tRNA synthetase family. O-phosphoseryl-tRNA(Cys) synthetase subfamily. Homotetramer. Interacts with SepCysS.

It catalyses the reaction tRNA(Cys) + O-phospho-L-serine + ATP = O-phospho-L-seryl-tRNA(Cys) + AMP + diphosphate. Functionally, catalyzes the attachment of O-phosphoserine (Sep) to tRNA(Cys). The polypeptide is O-phosphoserine--tRNA(Cys) ligase (Methanosarcina acetivorans (strain ATCC 35395 / DSM 2834 / JCM 12185 / C2A)).